We begin with the raw amino-acid sequence, 151 residues long: Probable calcium-binding protein CML31 (151 aa).

4 consecutive EF-hand domains span residues 14–42 (ALFATFDHDGDGRISAAELRLCMKTTLGE), 44–79 (VSDEEAGQLVASVDADGDGLLCEAEFVRLVQAAEVE), 84–119 (RRGTGLREAFGMYEMEGEGCITPTSLRRMLRRLGSD), and 120–151 (QDIDDCRAMICRFDLNGDGVLSFDEFKIMMNA). The Ca(2+) site is built by aspartate 20, aspartate 22, aspartate 24, arginine 26, glutamate 31, aspartate 57, aspartate 59, aspartate 61, and glutamate 68. The Ca(2+) site is built by aspartate 133, asparagine 135, aspartate 137, and glutamate 144.

Its function is as follows. Potential calcium sensor. In Oryza sativa subsp. japonica (Rice), this protein is Probable calcium-binding protein CML31 (CML31).